A 200-amino-acid chain; its full sequence is Holliday junction branch migration complex subunit RuvA (200 aa).

The tract at residues 1 to 63 is domain I; that stretch reads MFEYLTGLIT…EDAITLFGFA (63 aa). A domain II region spans residues 64-142; sequence TQAEKRLFTQ…AVQDEVQLDF (79 aa). The segment at 143-151 is flexible linker; it reads TAPGPLGPS. Positions 151 to 200 are domain III; sequence SAALQDALAALESLGYTTKQVERVQKQLEGLQGELSTNDYLSQGLKLLSR.

This sequence belongs to the RuvA family. As to quaternary structure, homotetramer. Forms an RuvA(8)-RuvB(12)-Holliday junction (HJ) complex. HJ DNA is sandwiched between 2 RuvA tetramers; dsDNA enters through RuvA and exits via RuvB. An RuvB hexamer assembles on each DNA strand where it exits the tetramer. Each RuvB hexamer is contacted by two RuvA subunits (via domain III) on 2 adjacent RuvB subunits; this complex drives branch migration. In the full resolvosome a probable DNA-RuvA(4)-RuvB(12)-RuvC(2) complex forms which resolves the HJ.

It is found in the cytoplasm. Its function is as follows. The RuvA-RuvB-RuvC complex processes Holliday junction (HJ) DNA during genetic recombination and DNA repair, while the RuvA-RuvB complex plays an important role in the rescue of blocked DNA replication forks via replication fork reversal (RFR). RuvA specifically binds to HJ cruciform DNA, conferring on it an open structure. The RuvB hexamer acts as an ATP-dependent pump, pulling dsDNA into and through the RuvAB complex. HJ branch migration allows RuvC to scan DNA until it finds its consensus sequence, where it cleaves and resolves the cruciform DNA. The sequence is that of Holliday junction branch migration complex subunit RuvA from Limosilactobacillus fermentum (strain NBRC 3956 / LMG 18251) (Lactobacillus fermentum).